A 329-amino-acid chain; its full sequence is NADH-quinone oxidoreductase subunit H 2 (329 aa).

8 helical membrane-spanning segments follow: residues 12–32, 78–98, 120–140, 159–179, 191–211, 242–262, 270–290, and 309–329; these read GAKI…LVFA, WLFY…FAVI, VGLL…ALGG, LISY…LAGS, GVWF…SIAA, LFFV…TTFF, LLPP…FFIW, and KVLT…LMFV.

Belongs to the complex I subunit 1 family. In terms of assembly, NDH-1 is composed of 14 different subunits. Subunits NuoA, H, J, K, L, M, N constitute the membrane sector of the complex.

It localises to the cell inner membrane. The enzyme catalyses a quinone + NADH + 5 H(+)(in) = a quinol + NAD(+) + 4 H(+)(out). Its function is as follows. NDH-1 shuttles electrons from NADH, via FMN and iron-sulfur (Fe-S) centers, to quinones in the respiratory chain. The immediate electron acceptor for the enzyme in this species is believed to be ubiquinone. Couples the redox reaction to proton translocation (for every two electrons transferred, four hydrogen ions are translocated across the cytoplasmic membrane), and thus conserves the redox energy in a proton gradient. This subunit may bind ubiquinone. In Geobacter sulfurreducens (strain ATCC 51573 / DSM 12127 / PCA), this protein is NADH-quinone oxidoreductase subunit H 2.